We begin with the raw amino-acid sequence, 160 residues long: 2-C-methyl-D-erythritol 2,4-cyclodiphosphate synthase (160 aa).

2 residues coordinate a divalent metal cation: D11 and H13. 4-CDP-2-C-methyl-D-erythritol 2-phosphate is bound by residues 11 to 13 and 37 to 38; these read DVH and HS. Residue H45 coordinates a divalent metal cation. 4-CDP-2-C-methyl-D-erythritol 2-phosphate contacts are provided by residues 59–61, 64–68, 103–109, 135–138, F142, and R145; these read DIG, FPDTD, AQAPKMA, and TTTE.

It belongs to the IspF family. Homotrimer. The cofactor is a divalent metal cation.

It carries out the reaction 4-CDP-2-C-methyl-D-erythritol 2-phosphate = 2-C-methyl-D-erythritol 2,4-cyclic diphosphate + CMP. The protein operates within isoprenoid biosynthesis; isopentenyl diphosphate biosynthesis via DXP pathway; isopentenyl diphosphate from 1-deoxy-D-xylulose 5-phosphate: step 4/6. Involved in the biosynthesis of isopentenyl diphosphate (IPP) and dimethylallyl diphosphate (DMAPP), two major building blocks of isoprenoid compounds. Catalyzes the conversion of 4-diphosphocytidyl-2-C-methyl-D-erythritol 2-phosphate (CDP-ME2P) to 2-C-methyl-D-erythritol 2,4-cyclodiphosphate (ME-CPP) with a corresponding release of cytidine 5-monophosphate (CMP). This Thioalkalivibrio sulfidiphilus (strain HL-EbGR7) protein is 2-C-methyl-D-erythritol 2,4-cyclodiphosphate synthase.